We begin with the raw amino-acid sequence, 200 residues long: ATP synthase subunit s, mitochondrial (200 aa).

Residues 1-25 (MMMFGKISRQLFSLKKIPWSCDSRY) constitute a mitochondrion transit peptide. The interval 1-61 (MMMFGKISRQ…SEWLLRCGAK (61 aa)) is N-terminal domain. A Mg(2+)-binding site is contributed by Gly-59. LRR repeat units lie at residues 62–87 (VRYCGHQKWLQDYNKLPGGSVDRYKI), 88–116 (QAIDATDSCIMDIGFDHLVGLEHVERITL), 117–141 (CRCHYIEDNCLQRLSQLENLRKSLL), and 142–173 (ELEIIACGNVTDNGVIALRHFKNLKYLFLSDL). Position 93 (Thr-93) interacts with Mg(2+).

This sequence belongs to the ATP synthase subunit s family. Homotetramer. Associates with ATP synthase.

The protein resides in the mitochondrion. It localises to the mitochondrion inner membrane. Involved in regulation of mitochondrial membrane ATP synthase. Necessary for H(+) conduction of ATP synthase. Facilitates energy-driven catalysis of ATP synthesis by blocking a proton leak through an alternative proton exit pathway. The chain is ATP synthase subunit s, mitochondrial from Rattus norvegicus (Rat).